A 342-amino-acid polypeptide reads, in one-letter code: Heat-inducible transcription repressor HrcA (342 aa).

The protein belongs to the HrcA family.

Its function is as follows. Negative regulator of class I heat shock genes (grpE-dnaK-dnaJ and groELS operons). Prevents heat-shock induction of these operons. In Acholeplasma laidlawii, this protein is Heat-inducible transcription repressor HrcA.